The following is a 268-amino-acid chain: Interleukin-2 receptor subunit alpha (268 aa).

A signal peptide spans 1–21 (MEPRLLMLGFLSLTIVPSCRA). The region spanning 22–79 (ELCLYDPPEVPNATFKALSYKNGTILNCECKRGFRRLKELVYMRCLGNSWSSNCQCTS) is the Sushi 1 domain. The Extracellular segment spans residues 22–236 (ELCLYDPPEV…ETFVLTMEYK (215 aa)). 3 disulfides stabilise this stretch: Cys24–Cys66, Cys49–Cys75, and Cys51–Cys77. 2 N-linked (GlcNAc...) asparagine glycosylation sites follow: Asn33 and Asn43. Positions 86 to 109 (RKQVTAQLEHQKEQQTTTDMQKPT) are disordered. Positions 88-109 (QVTAQLEHQKEQQTTTDMQKPT) are enriched in polar residues. Residue Asn116 is glycosylated (N-linked (GlcNAc...) asparagine). The region spanning 119–182 (GHCREPPPWK…WTQPQLTCVD (64 aa)) is the Sushi 2 domain. Cystine bridges form between Cys121–Cys164 and Cys148–Cys180. Residues 189-219 (FLASEESQGSRNSSPESETSCPITTTDFPQP) form a disordered region. The span at 193 to 211 (EESQGSRNSSPESETSCPI) shows a compositional bias: polar residues. Residues 237 to 257 (VAVASCLFLLISILLLSGLTW) form a helical membrane-spanning segment. The Cytoplasmic portion of the chain corresponds to 258-268 (QHRWRKSRRTI).

As to quaternary structure, non-covalent dimer of an alpha and a beta subunit. IL2R exists in 3 different forms: a high affinity dimer, an intermediate affinity monomer (beta subunit), and a low affinity monomer (alpha subunit). The high and intermediate affinity forms also associate with a gamma subunit.

The protein localises to the membrane. Functionally, receptor for interleukin-2. The receptor is involved in the regulation of immune tolerance by controlling regulatory T cells (TREGs) activity. TREGs suppress the activation and expansion of autoreactive T-cells. The protein is Interleukin-2 receptor subunit alpha (Il2ra) of Mus musculus (Mouse).